The following is a 503-amino-acid chain: Phenylalanine--tRNA ligase alpha subunit (503 aa).

S2 is modified (N-acetylserine). The tract at residues 2–173 (SDFQLEILKK…KRKLIAQGKI (172 aa)) is contains the major tRNA-Phe binding sites. L-phenylalanine is bound by residues T333, 374 to 376 (QVE), and Y414. A Mg(2+)-binding site is contributed by E416. F440 contacts L-phenylalanine.

Belongs to the class-II aminoacyl-tRNA synthetase family. Phe-tRNA synthetase alpha subunit type 2 subfamily. In terms of assembly, tetramer of two alpha and two beta subunits. Mg(2+) is required as a cofactor.

It is found in the cytoplasm. It carries out the reaction tRNA(Phe) + L-phenylalanine + ATP = L-phenylalanyl-tRNA(Phe) + AMP + diphosphate + H(+). This Saccharomyces cerevisiae (strain ATCC 204508 / S288c) (Baker's yeast) protein is Phenylalanine--tRNA ligase alpha subunit (FRS2).